The following is a 261-amino-acid chain: Imidazole glycerol phosphate synthase subunit HisF (261 aa).

Residues D12 and D131 contribute to the active site.

The protein belongs to the HisA/HisF family. As to quaternary structure, heterodimer of HisH and HisF.

It localises to the cytoplasm. The catalysed reaction is 5-[(5-phospho-1-deoxy-D-ribulos-1-ylimino)methylamino]-1-(5-phospho-beta-D-ribosyl)imidazole-4-carboxamide + L-glutamine = D-erythro-1-(imidazol-4-yl)glycerol 3-phosphate + 5-amino-1-(5-phospho-beta-D-ribosyl)imidazole-4-carboxamide + L-glutamate + H(+). Its pathway is amino-acid biosynthesis; L-histidine biosynthesis; L-histidine from 5-phospho-alpha-D-ribose 1-diphosphate: step 5/9. In terms of biological role, IGPS catalyzes the conversion of PRFAR and glutamine to IGP, AICAR and glutamate. The HisF subunit catalyzes the cyclization activity that produces IGP and AICAR from PRFAR using the ammonia provided by the HisH subunit. This chain is Imidazole glycerol phosphate synthase subunit HisF, found in Brucella abortus (strain S19).